A 361-amino-acid polypeptide reads, in one-letter code: Hsc70-interacting protein (361 aa).

The tract at residues 39-98 (GGTIPPAPASTSTDETSKGKAEEQPEEPVKSPEPESEESDLEIDNEGVIEPDNDDPQEMG) is disordered. Basic and acidic residues predominate over residues 53 to 71 (ETSKGKAEEQPEEPVKSPE). The segment covering 72–98 (PESEESDLEIDNEGVIEPDNDDPQEMG) has biased composition (acidic residues). TPR repeat units lie at residues 112 to 145 (ANEK…NPCL), 147 to 179 (ILYA…NPDS), and 181 to 213 (QTYK…DYDE). Over residues 254–270 (KAREEHERAQREEEARR) the composition is skewed to basic and acidic residues. The interval 254–292 (KAREEHERAQREEEARRQAGGAQFGGFPGGFPGGFPGAM) is disordered. Positions 275–292 (AQFGGFPGGFPGGFPGAM) are enriched in gly residues. One can recognise an STI1 domain in the interval 311–350 (DPEVLAAMQDPEVMAAFQDVAQNPANMSKYQNNPKVMSLI).

This sequence belongs to the FAM10 family. As to quaternary structure, homotetramer. Interacts with HSC70 as well as DNAJ homologs and HSP90.

The protein resides in the cytoplasm. In terms of biological role, one HIP oligomer binds the ATPase domains of at least two HSC70 molecules dependent on activation of the HSC70 ATPase by HSP40. Stabilizes the ADP state of HSC70 that has a high affinity for substrate protein. Through its own chaperone activity, it may contribute to the interaction of HSC70 with various target proteins. This is Hsc70-interacting protein (ST13) from Gallus gallus (Chicken).